The chain runs to 322 residues: Ethylmalonyl-CoA decarboxylase (322 aa).

K232 is subject to N6-acetyllysine; alternate. An N6-succinyllysine; alternate modification is found at K232. The residue at position 316 (K316) is an N6-succinyllysine.

This sequence belongs to the enoyl-CoA hydratase/isomerase family.

The protein resides in the cytoplasm. The protein localises to the cytosol. The catalysed reaction is (2S)-ethylmalonyl-CoA + H(+) = butanoyl-CoA + CO2. The enzyme catalyses (S)-methylmalonyl-CoA + H(+) = propanoyl-CoA + CO2. It catalyses the reaction (2R)-ethylmalonyl-CoA + H(+) = butanoyl-CoA + CO2. Its function is as follows. Decarboxylates ethylmalonyl-CoA, a potentially toxic metabolite, to form butyryl-CoA, suggesting it might be involved in metabolite proofreading. Acts preferentially on (S)-ethylmalonyl-CoA but also has some activity on the (R)-isomer. Also has methylmalonyl-CoA decarboxylase activity at lower level. This is Ethylmalonyl-CoA decarboxylase (Echdc1) from Mus musculus (Mouse).